The sequence spans 28 residues: SNKKDYRKEIVDKHNALSRSVKPTASNM.

A compositionally biased stretch (basic and acidic residues) spans 1 to 15 (SNKKDYRKEIVDKHN). Residues 1 to 28 (SNKKDYRKEIVDKHNALSRSVKPTASNM) are disordered. The span at 17–28 (LSRSVKPTASNM) shows a compositional bias: polar residues.

The protein belongs to the CRISP family. In terms of processing, contains 8 disulfide bonds. In terms of tissue distribution, expressed by the venom gland.

Its subcellular location is the secreted. Its function is as follows. Blocks contraction of smooth muscle elicited by high potassium-induced depolarization, but does not block caffeine-stimulated contraction. May target voltage-gated calcium channels on smooth muscle. The polypeptide is Cysteine-rich venom protein asurin-2 (Austrelaps superbus (Lowland copperhead snake)).